The following is a 113-amino-acid chain: Iron-sulfur cluster insertion protein ErpA (113 aa).

Cys-41, Cys-105, and Cys-107 together coordinate iron-sulfur cluster.

It belongs to the HesB/IscA family. In terms of assembly, homodimer. Requires iron-sulfur cluster as cofactor.

Its function is as follows. Required for insertion of 4Fe-4S clusters for at least IspG. In Photobacterium profundum (strain SS9), this protein is Iron-sulfur cluster insertion protein ErpA.